A 195-amino-acid polypeptide reads, in one-letter code: Exosome complex component CSL4 (195 aa).

2 positions are modified to phosphoserine: Ser21 and Ser98. In terms of domain architecture, S1 motif spans 66–147 (DVGAIVTCKV…AQSNYLLTTA (82 aa)).

Belongs to the CSL4 family. Component of the RNA exosome core complex (Exo-9), composed of EXOSC1, EXOSC2, EXOSC3, EXOSC4, EXOSC5, EXOSC6, EXOSC7, EXOSC8 and EXOSC9; within the complex interacts with EXOSC6. The catalytically inactive RNA exosome core complex (Exo-9) associates with the catalytic subunit EXOSC10/RRP6. Exo-9 may associate with DIS3 to form the nucleolar exosome complex, or DIS3L to form the cytoplasmic exosome complex. Exo-9 is formed by a hexameric base ring consisting of the heterodimers EXOSC4-EXOSC9, EXOSC5-EXOSC8 and EXOSC6-EXOSC7, and a cap ring consisting of EXOSC1, EXOSC2 and EXOSC3. The RNA exosome complex associates with cofactors C1D/RRP47, MPHOSPH6/MPP6 and MTREX/MTR4. Interacts with DDX60.

The protein resides in the nucleus. The protein localises to the nucleolus. It localises to the cytoplasm. Non-catalytic component of the RNA exosome complex which has 3'-&gt;5' exoribonuclease activity and participates in a multitude of cellular RNA processing and degradation events. In the nucleus, the RNA exosome complex is involved in proper maturation of stable RNA species such as rRNA, snRNA and snoRNA, in the elimination of RNA processing by-products and non-coding 'pervasive' transcripts, such as antisense RNA species and promoter-upstream transcripts (PROMPTs), and of mRNAs with processing defects, thereby limiting or excluding their export to the cytoplasm. The RNA exosome may be involved in Ig class switch recombination (CSR) and/or Ig variable region somatic hypermutation (SHM) by targeting AICDA deamination activity to transcribed dsDNA substrates. In the cytoplasm, the RNA exosome complex is involved in general mRNA turnover and specifically degrades inherently unstable mRNAs containing AU-rich elements (AREs) within their 3' untranslated regions, and in RNA surveillance pathways, preventing translation of aberrant mRNAs. It seems to be involved in degradation of histone mRNA. The catalytic inactive RNA exosome core complex of 9 subunits (Exo-9) is proposed to play a pivotal role in the binding and presentation of RNA for ribonucleolysis, and to serve as a scaffold for the association with catalytic subunits and accessory proteins or complexes. EXOSC1 as peripheral part of the Exo-9 complex stabilizes the hexameric ring of RNase PH-domain subunits through contacts with EXOSC6 and EXOSC8. This chain is Exosome complex component CSL4 (EXOSC1), found in Homo sapiens (Human).